A 302-amino-acid polypeptide reads, in one-letter code: Meiotically up-regulated gene 129 protein (302 aa).

In terms of biological role, has a role in meiosis. The chain is Meiotically up-regulated gene 129 protein (mug129) from Schizosaccharomyces pombe (strain 972 / ATCC 24843) (Fission yeast).